The chain runs to 96 residues: Plasminogen-like protein A (96 aa).

An N-terminal signal peptide occupies residues 1-19 (MEHKEVVLLLLLFLKSGQG). Residues 20-96 (EPLDDYVNAQ…RMRDVVLFEK (77 aa)) form the PAN domain. 2 disulfides stabilise this stretch: cysteine 49–cysteine 73 and cysteine 53–cysteine 61.

As to expression, expressed in liver.

The protein resides in the secreted. In terms of biological role, may bind non-covalently to lysine binding sites present in the kringle structures of plasminogen. This may interfere with the binding of fibrin or alpha-2-antiplasmin to plasminogen and may result in the localization of activity at sites necessary for extracellular matrix destruction. This Homo sapiens (Human) protein is Plasminogen-like protein A (PLGLA).